The sequence spans 627 residues: (-)-alpha-pinene synthase 2, chloroplastic (627 aa).

Residues 1 to 36 (MALVSVAPMASRSCLHKSLSSSAHELKTICRTIPTL) constitute a chloroplast transit peptide. Residues Asp-378, Asp-382, and Asp-530 each coordinate Mg(2+). Residues 378–382 (DDMYD) carry the DDXXD motif motif.

The protein belongs to the terpene synthase family. Tpsd subfamily. Mg(2+) serves as cofactor. It depends on Mn(2+) as a cofactor.

The protein resides in the plastid. It localises to the chloroplast. It catalyses the reaction (2E)-geranyl diphosphate = (1S,5S)-alpha-pinene + diphosphate. The enzyme catalyses (2E)-geranyl diphosphate = (1S,5S)-beta-pinene + diphosphate. Its pathway is terpene metabolism; oleoresin biosynthesis. Involved in defensive oleoresin formation in conifers in response to insect attack or other injury. Involved in monoterpene (C10) olefins biosynthesis. A mixture of alpha- and beta-pinene (35:10) is produced by this enzyme. In Picea sitchensis (Sitka spruce), this protein is (-)-alpha-pinene synthase 2, chloroplastic.